The sequence spans 429 residues: Histidine--tRNA ligase (429 aa).

Belongs to the class-II aminoacyl-tRNA synthetase family. In terms of assembly, homodimer.

It is found in the cytoplasm. It carries out the reaction tRNA(His) + L-histidine + ATP = L-histidyl-tRNA(His) + AMP + diphosphate + H(+). The chain is Histidine--tRNA ligase from Escherichia fergusonii (strain ATCC 35469 / DSM 13698 / CCUG 18766 / IAM 14443 / JCM 21226 / LMG 7866 / NBRC 102419 / NCTC 12128 / CDC 0568-73).